The sequence spans 131 residues: Profilin-11 (131 aa).

Cys13 and Cys115 are oxidised to a cystine. The short motif at 81-97 (AVIRGKKGSGGITVKKT) is the Involved in PIP2 interaction element. Residue Thr111 is modified to Phosphothreonine.

The protein belongs to the profilin family. In terms of assembly, occurs in many kinds of cells as a complex with monomeric actin in a 1:1 ratio. Phosphorylated by MAP kinases.

Its subcellular location is the cytoplasm. It localises to the cytoskeleton. Its function is as follows. Binds to actin and affects the structure of the cytoskeleton. At high concentrations, profilin prevents the polymerization of actin, whereas it enhances it at low concentrations. The protein is Profilin-11 of Zea mays (Maize).